Consider the following 124-residue polypeptide: Large ribosomal subunit protein bL17 (124 aa).

Belongs to the bacterial ribosomal protein bL17 family. Part of the 50S ribosomal subunit. Contacts protein L32.

In Borrelia turicatae (strain 91E135), this protein is Large ribosomal subunit protein bL17.